The sequence spans 224 residues: UPF0319 protein VC_1853 (224 aa).

Positions 1-21 (MKLNPLILGLLLSFSAGHSLA) are cleaved as a signal peptide.

It belongs to the UPF0319 family.

This Vibrio cholerae serotype O1 (strain ATCC 39315 / El Tor Inaba N16961) protein is UPF0319 protein VC_1853.